Reading from the N-terminus, the 951-residue chain is Protein translocase subunit SecA (951 aa).

Residues Gln90, 108–112 (GEGKT), and Asp509 contribute to the ATP site.

This sequence belongs to the SecA family. Monomer and homodimer. Part of the essential Sec protein translocation apparatus which comprises SecA, SecYEG and auxiliary proteins SecDF. Other proteins may also be involved.

The protein localises to the cell inner membrane. It localises to the cellular thylakoid membrane. It is found in the cytoplasm. The enzyme catalyses ATP + H2O + cellular proteinSide 1 = ADP + phosphate + cellular proteinSide 2.. In terms of biological role, part of the Sec protein translocase complex. Interacts with the SecYEG preprotein conducting channel. Has a central role in coupling the hydrolysis of ATP to the transfer of proteins into and across the cell membrane, serving as an ATP-driven molecular motor driving the stepwise translocation of polypeptide chains across the membrane. Probably participates in protein translocation into and across both the cytoplasmic and thylakoid membranes in cyanobacterial cells. This Prochlorococcus marinus (strain MIT 9303) protein is Protein translocase subunit SecA.